A 601-amino-acid chain; its full sequence is MISMGMTSKGQNVDGAPAGNSSSEWIISSSSSPFQANKRYSLDPPFGSDYSPPASPQNELDPLSSYFLNLQSEDNDVRKTAIEYIINTLSNPDNEKLIKNHLPMIVVLSTESPFDDISEAFTNFLKPIQEKYHIPKQRTTVFTSESQLPPLNTDDELTRKLFQDVFLQHGRVNHLTRILGWHPQYLEKFLLAYNTIMRDPGPLPLHWRNYIGILAAARYKCSYIIALQEHEFLMNNGDARWLQGIDHIPAKLKNLLKVIELLAHQPWLLPKLDIEYLVKGTDAWSIAELVHAMVLICTFLSLSGFVFCCGISPECGLSESNNLSSSFSLNDSDCEIEDTAATENTAKVMELLKNRRSQQQDDDDDDQLHDRQQDFHNAGDDSQSSNNNTTTTTTTTTTTTTTTNTNTTSNSAGGGDSSSSTLSQSSDRMSDFSRYIGNNTMTHTDFDVSSKLYNIFSAQEYSWREHGYELVSRYFPDAAPLLDEEFSFVYTMTYYKFNNNTDIDTLPFRRAVWYYVQRVKGMLHDDYNYQEVNMFLSRSLKNFVKKAVCFPETIKRDDYSKLGYSLKPDEKCHLSLLAVCSHKQASLLYGLYSVMNYQNRR.

A compositionally biased stretch (polar residues) spans 1-11; the sequence is MISMGMTSKGQ. The interval 1–58 is disordered; the sequence is MISMGMTSKGQNVDGAPAGNSSSEWIISSSSSPFQANKRYSLDPPFGSDYSPPASPQN. Residue Asn-20 is glycosylated (N-linked (GlcNAc...) asparagine). The segment covering 21–32 has biased composition (low complexity); that stretch reads SSSEWIISSSSS. N-linked (GlcNAc...) asparagine glycans are attached at residues Asn-322 and Asn-330. The tract at residues 355-425 is disordered; sequence RRSQQQDDDD…DSSSSTLSQS (71 aa). A compositionally biased stretch (basic and acidic residues) spans 368–379; it reads LHDRQQDFHNAG. Positions 380-425 are enriched in low complexity; that stretch reads DDSQSSNNNTTTTTTTTTTTTTTTNTNTTSNSAGGGDSSSSTLSQS. N-linked (GlcNAc...) asparagine glycans are attached at residues Asn-387, Asn-388, Asn-406, Asn-438, and Asn-499.

It belongs to the sestrin family.

Its subcellular location is the nucleus. The protein resides in the cytoplasm. Functionally, may function as a negative feedback regulator of TOR function. The polypeptide is Sestrin homolog (Dictyostelium discoideum (Social amoeba)).